The chain runs to 356 residues: CX3C chemokine receptor 1 (356 aa).

Over 1-26 (MTTLYSDWATESFEYDESSEACFIGD) the chain is Extracellular. A helical transmembrane segment spans residues 27 to 47 (IVAFGTIFLSIFYSLVFAFGL). The Cytoplasmic portion of the chain corresponds to 48 to 68 (VGNLLVVCALTSSRKPKSITD). A helical transmembrane segment spans residues 69–89 (IYLLNLALSDLLFVATLPFWT). Topologically, residues 90–105 (HYVISEQGFHNAVCKL) are extracellular. An intrachain disulfide couples C103 to C176. The chain crosses the membrane as a helical span at residues 106-126 (TTALFFIGFFGGIFFITVISI). The Cytoplasmic portion of the chain corresponds to 127-147 (DRYMAIVLAANSINNRTVQHG). The helical transmembrane segment at 148-168 (VTTSLGVWAAAILVAAPQFMF) threads the bilayer. The Extracellular segment spans residues 169 to 195 (TKQKGNECLGDYPEVLQDIWPVLRNTE). Residues 196-216 (ANFLGFLLPVLIMSYCYFRII) form a helical membrane-spanning segment. Topologically, residues 217 to 232 (QTLFSCKNHKKAKAIK) are cytoplasmic. The helical transmembrane segment at 233-253 (LILLVVIVFFLFWTPYNVMIF) threads the bilayer. Over 254–277 (LETLKLYGFFPNCDMKRDLRLALS) the chain is Extracellular. A helical transmembrane segment spans residues 278 to 298 (VTETVAFSHCCLNPLIYAFAG). At 299-356 (QKFRRYLRHLSRKCQAVLCGRPVHVSFSPSESQRSRQESIVSSNFTHYTSDGDASLLL) the chain is on the cytoplasmic side. The residue at position 347 (T347) is a Phosphothreonine.

It belongs to the G-protein coupled receptor 1 family. In terms of assembly, found in a ternary complex with CX3CL1 and ITGAV:ITGB3 or ITGA4:ITGB1. In terms of processing, this protein is not N-glycosylated which is unusual for G-protein-coupled receptors.

Its subcellular location is the cell membrane. In terms of biological role, receptor for the C-X3-C chemokine fractalkine (CX3CL1) present on many early leukocyte cells; CX3CR1-CX3CL1 signaling exerts distinct functions in different tissue compartments, such as immune response, inflammation, cell adhesion and chemotaxis. CX3CR1-CX3CL1 signaling mediates cell migratory functions. Responsible for the recruitment of natural killer (NK) cells to inflamed tissues. Acts as a regulator of inflammation process leading to atherogenesis by mediating macrophage and monocyte recruitment to inflamed atherosclerotic plaques, promoting cell survival. Involved in airway inflammation by promoting interleukin 2-producing T helper (Th2) cell survival in inflamed lung. Involved in the migration of circulating monocytes to non-inflamed tissues, where they differentiate into macrophages and dendritic cells. Acts as a negative regulator of angiogenesis, probably by promoting macrophage chemotaxis. Plays a key role in brain microglia by regulating inflammatory response in the central nervous system (CNS) and regulating synapse maturation. Required to restrain the microglial inflammatory response in the CNS and the resulting parenchymal damage in response to pathological stimuli. Involved in brain development by participating in synaptic pruning, a natural process during which brain microglia eliminates extra synapses during postnatal development. Synaptic pruning by microglia is required to promote the maturation of circuit connectivity during brain development. Acts as an important regulator of the gut microbiota by controlling immunity to intestinal bacteria and fungi. Expressed in lamina propria dendritic cells in the small intestine, which form transepithelial dendrites capable of taking up bacteria in order to provide defense against pathogenic bacteria. Required to initiate innate and adaptive immune responses against dissemination of commensal fungi (mycobiota) component of the gut: expressed in mononuclear phagocytes (MNPs) and acts by promoting induction of antifungal IgG antibodies response to confer protection against disseminated C.albicans or C.auris infection. Also acts as a receptor for C-C motif chemokine CCL26, inducing cell chemotaxis. This chain is CX3C chemokine receptor 1, found in Oryctolagus cuniculus (Rabbit).